Reading from the N-terminus, the 466-residue chain is tRNA-2-methylthio-N(6)-dimethylallyladenosine synthase (466 aa).

An MTTase N-terminal domain is found at 21–137 (GSYWITTFGC…LEDLLNQVDN (117 aa)). Residues Cys-30, Cys-66, Cys-100, Cys-172, Cys-176, and Cys-179 each contribute to the [4Fe-4S] cluster site. In terms of domain architecture, Radical SAM core spans 158–395 (RDSNICAWVN…NLLVEQTAKD (238 aa)). Residues 398-466 (TRYHNQIVEV…AFSLTGSPIQ (69 aa)) form the TRAM domain.

Belongs to the methylthiotransferase family. MiaB subfamily. As to quaternary structure, monomer. Requires [4Fe-4S] cluster as cofactor.

The protein resides in the cytoplasm. The catalysed reaction is N(6)-dimethylallyladenosine(37) in tRNA + (sulfur carrier)-SH + AH2 + 2 S-adenosyl-L-methionine = 2-methylsulfanyl-N(6)-dimethylallyladenosine(37) in tRNA + (sulfur carrier)-H + 5'-deoxyadenosine + L-methionine + A + S-adenosyl-L-homocysteine + 2 H(+). Its function is as follows. Catalyzes the methylthiolation of N6-(dimethylallyl)adenosine (i(6)A), leading to the formation of 2-methylthio-N6-(dimethylallyl)adenosine (ms(2)i(6)A) at position 37 in tRNAs that read codons beginning with uridine. This is tRNA-2-methylthio-N(6)-dimethylallyladenosine synthase from Prochlorococcus marinus (strain SARG / CCMP1375 / SS120).